The primary structure comprises 466 residues: Acetyl-coenzyme A carboxylase carboxyl transferase subunit beta, chloroplastic (466 aa).

The 269-residue stretch at 198 to 466 (LWIQCENCYE…FPLNQNSIGQ (269 aa)) folds into the CoA carboxyltransferase N-terminal domain. The Zn(2+) site is built by cysteine 202, cysteine 205, cysteine 221, and cysteine 224. A C4-type zinc finger spans residues 202 to 224 (CENCYELNYKKLLKSKMRICDEC).

This sequence belongs to the AccD/PCCB family. In terms of assembly, acetyl-CoA carboxylase is a heterohexamer composed of biotin carboxyl carrier protein, biotin carboxylase and 2 subunits each of ACCase subunit alpha and ACCase plastid-coded subunit beta (accD). It depends on Zn(2+) as a cofactor.

Its subcellular location is the plastid. The protein resides in the chloroplast stroma. The catalysed reaction is N(6)-carboxybiotinyl-L-lysyl-[protein] + acetyl-CoA = N(6)-biotinyl-L-lysyl-[protein] + malonyl-CoA. Its pathway is lipid metabolism; malonyl-CoA biosynthesis; malonyl-CoA from acetyl-CoA: step 1/1. In terms of biological role, component of the acetyl coenzyme A carboxylase (ACC) complex. Biotin carboxylase (BC) catalyzes the carboxylation of biotin on its carrier protein (BCCP) and then the CO(2) group is transferred by the transcarboxylase to acetyl-CoA to form malonyl-CoA. The chain is Acetyl-coenzyme A carboxylase carboxyl transferase subunit beta, chloroplastic from Fagopyrum esculentum subsp. ancestrale (Wild buckwheat).